A 404-amino-acid polypeptide reads, in one-letter code: Phosphoglycerate kinase (404 aa).

Residues 22–24 (DLN), Arg37, 60–63 (HLGR), Arg119, and Arg156 each bind substrate. ATP contacts are provided by residues Lys206, Gly302, Glu333, and 359 to 362 (GGDS).

Belongs to the phosphoglycerate kinase family. As to quaternary structure, monomer.

The protein resides in the cytoplasm. The enzyme catalyses (2R)-3-phosphoglycerate + ATP = (2R)-3-phospho-glyceroyl phosphate + ADP. Its pathway is carbohydrate degradation; glycolysis; pyruvate from D-glyceraldehyde 3-phosphate: step 2/5. The polypeptide is Phosphoglycerate kinase (Clavibacter sepedonicus (Clavibacter michiganensis subsp. sepedonicus)).